A 335-amino-acid chain; its full sequence is MKTIVSGIQSTNSLTLGNYLGALKNFINLQNDNKMFIFIADMHSITVDFNPKELESNRKSVASIYAACGLDFDKNIIFYQSSVLAHTQLSYIITCHSYMGELSRMTQFKDKSQKTNANGTTNIPTGLFIYPCLMAADILLYDADLVPVGKDQKQHMELARDIAIRMNKKYKTNLFKIPEIYQSEMGAKIMDLVDPSIKMSKSNANTKGTIFLLDKVEDVRKKIMQAKTDSLNKVKYDVENQPGVSNLMTIYSCLTNKKTDEIEKEFENKNYGEFKTKVADAVCLLLEDIQKKYQIYFNSNEIEQKLEKNAKKCNEIVNKKINLVQQTLGLGTYKG.

ATP is bound by residues 9-11 (QST) and 17-18 (GN). The 'HIGH' region signature appears at 10–18 (STNSLTLGN). Aspartate 137 contacts L-tryptophan. ATP contacts are provided by residues 149–151 (GKD), isoleucine 189, and 198–202 (KMSKS). Residues 198–202 (KMSKS) carry the 'KMSKS' region motif.

It belongs to the class-I aminoacyl-tRNA synthetase family. As to quaternary structure, homodimer.

The protein localises to the cytoplasm. It catalyses the reaction tRNA(Trp) + L-tryptophan + ATP = L-tryptophyl-tRNA(Trp) + AMP + diphosphate + H(+). In terms of biological role, catalyzes the attachment of tryptophan to tRNA(Trp). The chain is Tryptophan--tRNA ligase from Malacoplasma penetrans (strain HF-2) (Mycoplasma penetrans).